A 161-amino-acid chain; its full sequence is uncharacterized protein (161 aa).

To R.leguminosarum PsiB.

This is an uncharacterized protein from Sinorhizobium fredii (strain NBRC 101917 / NGR234).